We begin with the raw amino-acid sequence, 804 residues long: Angiotensin-converting enzyme 2 (804 aa).

A signal peptide spans Met1–Ala17. The Extracellular portion of the chain corresponds to Gln18 to Thr739. In terms of domain architecture, Peptidase M2 spans Ser19–Ser606. Asn53 and Asn90 each carry an N-linked (GlcNAc...) asparagine glycan. Position 168 (Arg168) interacts with chloride. A substrate-binding site is contributed by Arg272. Asn298 is a glycosylation site (N-linked (GlcNAc...) asparagine). Cys343 and Cys360 are joined by a disulfide. His344–Pro345 is a binding site for substrate. His373 provides a ligand contact to Zn(2+). The active-site Proton acceptor is the Glu374. Zn(2+) contacts are provided by His377 and Glu401. N-linked (GlcNAc...) asparagine glycosylation occurs at Asn431. Chloride is bound by residues Trp476 and Lys480. His504 functions as the Proton donor in the catalytic mechanism. Tyr514 contacts substrate. Cys529 and Cys541 are oxidised to a cystine. An N-linked (GlcNAc...) asparagine glycan is attached at Asn545. In terms of domain architecture, Collectrin-like spans Ser613–Leu804. The segment at Arg651–Arg658 is essential for cleavage by ADAM17. 2 N-linked (GlcNAc...) asparagine glycosylation sites follow: Asn659 and Asn689. Residues Arg696–Gln715 are essential for cleavage by TMPRSS11D and TMPRSS2. The helical transmembrane segment at Ile740–Ile760 threads the bilayer. At Phe761 to Leu804 the chain is on the cytoplasmic side. Residues Asn771–Leu804 form a disordered region. The LIR motif lies at Glu777–Leu785. Tyr780 bears the Phosphotyrosine mark. Positions Tyr780–Val783 match the Endocytic sorting signal motif. Positions Tyr780–Asp784 match the SH2-binding motif. The residue at position 782 (Ser782) is a Phosphoserine. Residue Lys787 forms a Glycyl lysine isopeptide (Lys-Gly) (interchain with G-Cter in ubiquitin) linkage. The segment covering Gly788–Leu804 has biased composition (polar residues). Positions Asn791 to Phe794 match the PTB motif. Residues Thr802–Leu804 carry the PDZ-binding motif.

It belongs to the peptidase M2 family. Homodimer. Interacts with the catalytically active form of TMPRSS2. Interacts with SLC6A19; this interaction is essential for expression and function of SLC6A19 in intestine. Interacts with ITGA5:ITGB1. Probably interacts (via endocytic sorting signal motif) with AP2M1; the interaction is inhibited by phosphorylation of Tyr-780. Interacts (via PDZ-binding motif) with NHERF1 (via PDZ domains); the interaction may enhance ACE2 membrane residence. Zn(2+) serves as cofactor. Chloride is required as a cofactor. Proteolytic cleavage by ADAM17 generates a secreted form. Also cleaved by serine proteases: TMPRSS2, TMPRSS11D and HPN/TMPRSS1. In terms of processing, phosphorylated. Phosphorylation at Tyr-780 probably inhibits interaction with AP2M1 and enables interactions with proteins containing SH2 domains. Post-translationally, ubiquitinated. Ubiquitinated on Lys-787 via 'Lys-48'-linked ubiquitin. 'Lys-48'-linked deubiquitinated by USP50 on the Lys-787; leading to its stabilization.

It is found in the secreted. Its subcellular location is the cell membrane. The protein resides in the cytoplasm. The protein localises to the cell projection. It localises to the cilium. It is found in the apical cell membrane. It carries out the reaction angiotensin II + H2O = angiotensin-(1-7) + L-phenylalanine. It catalyses the reaction angiotensin I + H2O = angiotensin-(1-9) + L-leucine. The catalysed reaction is bradykinin(1-8) + H2O = bradykinin(1-7) + L-phenylalanine. The enzyme catalyses neurotensin + H2O = neurotensin-(1-12) + L-leucine. It carries out the reaction kinetensin + H2O = kinetensin-(1-8) + L-leucine. It catalyses the reaction dynorphin A-(1-13) + H2O = dynorphin A-(1-12) + L-lysine. The catalysed reaction is apelin-13 + H2O = apelin-12 + L-phenylalanine. The enzyme catalyses [Pyr1]apelin-13 + H2O = [Pyr1]apelin-12 + L-phenylalanine. It carries out the reaction apelin-17 + H2O = apelin-16 + L-phenylalanine. Essential counter-regulatory carboxypeptidase of the renin-angiotensin hormone system that is a critical regulator of blood volume, systemic vascular resistance, and thus cardiovascular homeostasis. Converts angiotensin I to angiotensin 1-9, a nine-amino acid peptide with anti-hypertrophic effects in cardiomyocytes, and angiotensin II to angiotensin 1-7, which then acts as a beneficial vasodilator and anti-proliferation agent, counterbalancing the actions of the vasoconstrictor angiotensin II. Also removes the C-terminal residue from three other vasoactive peptides, neurotensin, kinetensin, and des-Arg bradykinin, but is not active on bradykinin. Also cleaves other biological peptides, such as apelins, casomorphins and dynorphin A. Plays an important role in amino acid transport by acting as binding partner of amino acid transporter SLC6A19 in intestine, regulating trafficking, expression on the cell surface, and its catalytic activity. This Bos taurus (Bovine) protein is Angiotensin-converting enzyme 2 (ACE2).